A 356-amino-acid polypeptide reads, in one-letter code: Protein-L-isoaspartate O-methyltransferase domain-containing protein 1 (356 aa).

Residue G2 is the site of N-myristoyl glycine attachment. S64 is a catalytic residue. 3 adoMet binding motif regions span residues 85–94 (LNLGSGTGYL), 160–164 (YDRIY), and 181–191 (LKVGGILVMPI). Residues 240-250 (VRNLQDLARIY) form a BC-box region. The segment at 299-331 (PLDSEEDEKMEEDKEEEEKEPGEALKPEEPPQN) is disordered. The segment covering 301 to 318 (DSEEDEKMEEDKEEEEKE) has biased composition (acidic residues). Over residues 319-331 (PGEALKPEEPPQN) the composition is skewed to basic and acidic residues. Residues 340–343 (LPLP) form a CUL-box region.

This sequence belongs to the methyltransferase superfamily. L-isoaspartyl/D-aspartyl protein methyltransferase family. As to quaternary structure, component of the probable ECS(PCMTD1) E3 ubiquitin-protein ligase complex, at least composed of CUL5, ELOB, ELOC, RBX2 and PCMTD1. Interacts (via the BC-box) with ELOB and ELOC; the interaction is direct and stabilizes PCMTD1.

It localises to the cytoplasm. The protein resides in the membrane. Its function is as follows. Substrate recognition component of an ECS (Elongin BC-CUL5-SOCS-box protein) E3 ubiquitin ligase complex which mediates the ubiquitination and subsequent proteasomal degradation of target proteins. Specifically binds to the methyltransferase cofactor S-adenosylmethionine (AdoMet) via the N-terminal AdoMet binding motif, but does not display methyltransferase activity. May provide an alternate maintenance pathway for modified proteins by acting as a damage-specific E3 ubiquitin ligase adaptor protein. The polypeptide is Protein-L-isoaspartate O-methyltransferase domain-containing protein 1 (PCMTD1) (Bos taurus (Bovine)).